Here is a 182-residue protein sequence, read N- to C-terminus: MAPKLLLHGCCAHCTAYSFKYWQEQGFAVSVYWYNPNIHPFMEHQSRLEAMRKLSAEMGFELITEPSYHMAEYFKNVSANVDGRCRICFDMRLGQTAAYAAGHGYEYFSSSLFISPHQKHQDAVCSAEALAKETGVRFAYADLRKRYSDSRHITKPLDLYRQQYCGCVYSEYERFGKPNSPA.

Positions 10, 11, 85, and 88 each coordinate [4Fe-4S] cluster. Cysteine 165 and cysteine 167 are oxidised to a cystine.

Belongs to the QueH family.

The enzyme catalyses epoxyqueuosine(34) in tRNA + AH2 = queuosine(34) in tRNA + A + H2O. Its pathway is tRNA modification; tRNA-queuosine biosynthesis. Catalyzes the conversion of epoxyqueuosine (oQ) to queuosine (Q), which is a hypermodified base found in the wobble positions of tRNA(Asp), tRNA(Asn), tRNA(His) and tRNA(Tyr). This Dehalococcoides mccartyi (strain ATCC BAA-2266 / KCTC 15142 / 195) (Dehalococcoides ethenogenes (strain 195)) protein is Epoxyqueuosine reductase QueH.